Consider the following 863-residue polypeptide: Envelope glycoprotein gp160 (863 aa).

Positions 1-31 (MRVMGIRMNYQHLWKWGIMLLGILMTCSVAE) are cleaved as a signal peptide. The Extracellular segment spans residues 32 to 691 (DLWVTVYYGV…ITKWLWYIKI (660 aa)). An intrachain disulfide couples Cys53 to Cys73. 15 N-linked (GlcNAc...) asparagine; by host glycosylation sites follow: Asn87, Asn129, Asn136, Asn142, Asn143, Asn159, Asn163, Asn194, Asn199, Asn209, Asn246, Asn274, Asn288, Asn301, and Asn307. Disulfide bonds link Cys118–Cys217, Cys125–Cys208, Cys130–Cys160, Cys230–Cys259, and Cys240–Cys251. The segment at 130-159 (CTNAGGNKTTNGNNTTNQEEQMMEKGEMKN) is V1. Positions 160 to 208 (CSFNITTVISDKKKQVHALFYRLDVVPIDDDNSANTSNTNYTNYRLINC) are V2. Positions 308–341 (CTRPDNKITRQSTPIGLGQALYTTRIKGDIRQAY) are V3. Cys308 and Cys342 are oxidised to a cystine. Residues Asn343, Asn350, and Asn365 are each glycosylated (N-linked (GlcNAc...) asparagine; by host). Residues 374-384 (PAGGDPEITTH) are CD4-binding loop. 2 disulfide bridges follow: Cys388-Cys452 and Cys395-Cys425. Residues 395–425 (CNTSRLFNSTWNSSTWNNDTLNSEGTIKLPC) form a V4 region. 8 N-linked (GlcNAc...) asparagine; by host glycosylation sites follow: Asn396, Asn402, Asn406, Asn412, Asn455, Asn468, Asn469, and Asn472. V5 regions lie at residues 467-478 (VNNSTNETFRPG) and 470-478 (STNETFRPG). Residues 519 to 539 (AIGLGAVFLGFLGAAGSTMGA) are fusion peptide. Residues 581 to 599 (KQLQARVLAVESYLKDQQL) are immunosuppression. An intrachain disulfide couples Cys605 to Cys611. 4 N-linked (GlcNAc...) asparagine; by host glycosylation sites follow: Asn618, Asn623, Asn632, and Asn644. Positions 640-674 (REIDNYTGVIYSLIENSQIQQEKNEQDLLQLDKWA) form a coiled coil. The interval 669–690 (QLDKWASLWNWFSITKWLWYIK) is MPER; binding to GalCer. Residues 692-712 (FIMIVGGLIGLRIVFTVLSLV) form a helical membrane-spanning segment. The Cytoplasmic portion of the chain corresponds to 713–863 (NRVRQGYSPL…VRQGLERALL (151 aa)). A YXXL motif; contains endocytosis signal motif is present at residues 719 to 722 (YSPL). The tract at residues 729–748 (PAPRGPDRPEGIEEEGGEQG) is disordered. Cys771 carries the S-palmitoyl cysteine; by host lipid modification. The Di-leucine internalization motif signature appears at 862-863 (LL).

It belongs to the HIV-1 env protein family. In terms of assembly, the mature envelope protein (Env) consists of a homotrimer of non-covalently associated gp120-gp41 heterodimers. The resulting complex protrudes from the virus surface as a spike. There seems to be as few as 10 spikes on the average virion. Interacts with host CD4, CCR5 and CXCR4. Gp120 also interacts with the C-type lectins CD209/DC-SIGN and CLEC4M/DC-SIGNR (collectively referred to as DC-SIGN(R)). Gp120 and gp41 interact with GalCer. Gp120 interacts with host ITGA4/ITGB7 complex; on CD4+ T-cells, this interaction results in rapid activation of integrin ITGAL/LFA-1, which facilitates efficient cell-to-cell spreading of HIV-1. Gp120 interacts with cell-associated heparan sulfate; this interaction increases virus infectivity on permissive cells and may be involved in infection of CD4- cells. As to quaternary structure, the mature envelope protein (Env) consists of a homotrimer of non-covalently associated gp120-gp41 heterodimers. The resulting complex protrudes from the virus surface as a spike. There seems to be as few as 10 spikes on the average virion. Highly glycosylated by host. The high number of glycan on the protein is reffered to as 'glycan shield' because it contributes to hide protein sequence from adaptive immune system. Post-translationally, palmitoylation of the transmembrane protein and of Env polyprotein (prior to its proteolytic cleavage) is essential for their association with host cell membrane lipid rafts. Palmitoylation is therefore required for envelope trafficking to classical lipid rafts, but not for viral replication. In terms of processing, specific enzymatic cleavages in vivo yield mature proteins. Envelope glycoproteins are synthesized as an inactive precursor that is heavily N-glycosylated and processed likely by host cell furin in the Golgi to yield the mature SU and TM proteins. The cleavage site between SU and TM requires the minimal sequence [KR]-X-[KR]-R. About 2 of the 9 disulfide bonds of gp41 are reduced by P4HB/PDI, following binding to CD4 receptor.

The protein localises to the virion membrane. The protein resides in the host cell membrane. It localises to the host endosome membrane. Oligomerizes in the host endoplasmic reticulum into predominantly trimers. In a second time, gp160 transits in the host Golgi, where glycosylation is completed. The precursor is then proteolytically cleaved in the trans-Golgi and thereby activated by cellular furin or furin-like proteases to produce gp120 and gp41. Functionally, attaches the virus to the host lymphoid cell by binding to the primary receptor CD4. This interaction induces a structural rearrangement creating a high affinity binding site for a chemokine coreceptor like CXCR4 and/or CCR5. Acts as a ligand for CD209/DC-SIGN and CLEC4M/DC-SIGNR, which are respectively found on dendritic cells (DCs), and on endothelial cells of liver sinusoids and lymph node sinuses. These interactions allow capture of viral particles at mucosal surfaces by these cells and subsequent transmission to permissive cells. HIV subverts the migration properties of dendritic cells to gain access to CD4+ T-cells in lymph nodes. Virus transmission to permissive T-cells occurs either in trans (without DCs infection, through viral capture and transmission), or in cis (following DCs productive infection, through the usual CD4-gp120 interaction), thereby inducing a robust infection. In trans infection, bound virions remain infectious over days and it is proposed that they are not degraded, but protected in non-lysosomal acidic organelles within the DCs close to the cell membrane thus contributing to the viral infectious potential during DCs' migration from the periphery to the lymphoid tissues. On arrival at lymphoid tissues, intact virions recycle back to DCs' cell surface allowing virus transmission to CD4+ T-cells. Its function is as follows. Acts as a class I viral fusion protein. Under the current model, the protein has at least 3 conformational states: pre-fusion native state, pre-hairpin intermediate state, and post-fusion hairpin state. During fusion of viral and target intracellular membranes, the coiled coil regions (heptad repeats) assume a trimer-of-hairpins structure, positioning the fusion peptide in close proximity to the C-terminal region of the ectodomain. The formation of this structure appears to drive apposition and subsequent fusion of viral and target cell membranes. Complete fusion occurs in host cell endosomes and is dynamin-dependent, however some lipid transfer might occur at the plasma membrane. The virus undergoes clathrin-dependent internalization long before endosomal fusion, thus minimizing the surface exposure of conserved viral epitopes during fusion and reducing the efficacy of inhibitors targeting these epitopes. Membranes fusion leads to delivery of the nucleocapsid into the cytoplasm. The sequence is that of Envelope glycoprotein gp160 from Human immunodeficiency virus type 1 group M subtype D (isolate Z84) (HIV-1).